The sequence spans 45 residues: uncharacterized protein (45 aa).

This is an uncharacterized protein from Dictyostelium discoideum (Social amoeba).